The primary structure comprises 114 residues: ATP synthase subunit c (114 aa).

2 helical membrane passes run 31–51 (AVFY…AAGG) and 88–108 (IETF…TGIF).

This sequence belongs to the ATPase C chain family. In terms of assembly, F-type ATPases have 2 components, F(1) - the catalytic core - and F(0) - the membrane proton channel. F(1) has five subunits: alpha(3), beta(3), gamma(1), delta(1), epsilon(1). F(0) has three main subunits: a(1), b(2) and c(10-14). The alpha and beta chains form an alternating ring which encloses part of the gamma chain. F(1) is attached to F(0) by a central stalk formed by the gamma and epsilon chains, while a peripheral stalk is formed by the delta and b chains.

It is found in the cell inner membrane. Its function is as follows. F(1)F(0) ATP synthase produces ATP from ADP in the presence of a proton or sodium gradient. F-type ATPases consist of two structural domains, F(1) containing the extramembraneous catalytic core and F(0) containing the membrane proton channel, linked together by a central stalk and a peripheral stalk. During catalysis, ATP synthesis in the catalytic domain of F(1) is coupled via a rotary mechanism of the central stalk subunits to proton translocation. Functionally, key component of the F(0) channel; it plays a direct role in translocation across the membrane. A homomeric c-ring of between 10-14 subunits forms the central stalk rotor element with the F(1) delta and epsilon subunits. The protein is ATP synthase subunit c of Sulfurihydrogenibium sp. (strain YO3AOP1).